The following is an 86-amino-acid chain: Alpha-toxin TbTx5 (86 aa).

A signal peptide spans 1–19 (MNDFVFLVVACLLTAGTEG). The LCN-type CS-alpha/beta domain occupies 21 to 82 (KDGYPVEGDN…EPTKTNGRCK (62 aa)). Disulfide bonds link cysteine 31/cysteine 81, cysteine 35/cysteine 57, cysteine 43/cysteine 64, and cysteine 47/cysteine 66. The residue at position 83 (proline 83) is a Proline amide.

Belongs to the long (4 C-C) scorpion toxin superfamily. Sodium channel inhibitor family. Alpha subfamily. Expressed by the venom gland.

It localises to the secreted. Alpha toxins bind voltage-independently at site-3 of sodium channels (Nav) and inhibit the inactivation of the activated channels, thereby blocking neuronal transmission. This is Alpha-toxin TbTx5 from Tityus bahiensis (Brazilian scorpion).